A 696-amino-acid polypeptide reads, in one-letter code: DNA ligase (696 aa).

Residues 36 to 40 (DAVYD), 85 to 86 (SL), and Glu-124 each bind NAD(+). The active-site N6-AMP-lysine intermediate is the Lys-126. Residues Arg-147, Glu-184, Lys-308, and Lys-332 each contribute to the NAD(+) site. Zn(2+)-binding residues include Cys-426, Cys-429, Cys-444, and Cys-449. The region spanning 618-696 (QRTVSLQGQT…EEELLKLLAS (79 aa)) is the BRCT domain.

The protein belongs to the NAD-dependent DNA ligase family. LigA subfamily. Mg(2+) serves as cofactor. The cofactor is Mn(2+).

It catalyses the reaction NAD(+) + (deoxyribonucleotide)n-3'-hydroxyl + 5'-phospho-(deoxyribonucleotide)m = (deoxyribonucleotide)n+m + AMP + beta-nicotinamide D-nucleotide.. DNA ligase that catalyzes the formation of phosphodiester linkages between 5'-phosphoryl and 3'-hydroxyl groups in double-stranded DNA using NAD as a coenzyme and as the energy source for the reaction. It is essential for DNA replication and repair of damaged DNA. This is DNA ligase from Prochlorococcus marinus (strain MIT 9303).